The chain runs to 217 residues: Ras-related protein RABA2d (217 aa).

19–26 (GDSGVGKT) provides a ligand contact to GTP. The Effector region motif lies at 41-49 (SKSTIGVEF). Residues 67–71 (DTAGQ), 125–128 (NKAD), and 155–156 (SA) contribute to the GTP site. The disordered stretch occupies residues 196-217 (GQGTTINVEDTSGAGKRGCCST). Residues cysteine 214 and cysteine 215 are each lipidated (S-geranylgeranyl cysteine).

This sequence belongs to the small GTPase superfamily. Rab family. Expressed in root tips.

The protein resides in the endosome membrane. The protein localises to the golgi apparatus. It is found in the trans-Golgi network membrane. Intracellular vesicle trafficking and protein transport. The chain is Ras-related protein RABA2d (RABA2D) from Arabidopsis thaliana (Mouse-ear cress).